A 395-amino-acid chain; its full sequence is Subtilisin-like protease 9 (395 aa).

The N-terminal stretch at 1–20 (MGFFRTLFSFSIFALSLADT) is a signal peptide. The propeptide occupies 21–120 (SKFIGLDDVD…ADRVVKMAAL (100 aa)). The 82-residue stretch at 36–117 (SYIVVMKGAV…YVEADRVVKM (82 aa)) folds into the Inhibitor I9 domain. One can recognise a Peptidase S8 domain in the interval 128-395 (SWGLGRISHK…RRLLYNGSGA (268 aa)). Catalysis depends on charge relay system residues Asp-160 and His-191. Asn-252 carries N-linked (GlcNAc...) asparagine glycosylation. Catalysis depends on Ser-341, which acts as the Charge relay system. A glycan (N-linked (GlcNAc...) asparagine) is linked at Asn-391.

It belongs to the peptidase S8 family.

The protein localises to the secreted. Its function is as follows. Secreted subtilisin-like serine protease with keratinolytic activity that contributes to pathogenicity. The protein is Subtilisin-like protease 9 (SUB9) of Arthroderma otae (strain ATCC MYA-4605 / CBS 113480) (Microsporum canis).